The primary structure comprises 499 residues: Calcium/calmodulin-dependent protein kinase type II subunit delta (499 aa).

At Ala-2 the chain carries N-acetylalanine. The region spanning 14 to 272 (YQLFEELGKG…ASEALKHPWI (259 aa)) is the Protein kinase domain. Residues 20 to 28 (LGKGAFSVV) and Lys-43 each bind ATP. Catalysis depends on Asp-136, which acts as the Proton acceptor. The autoinhibitory domain stretch occupies residues 283-292 (HRQETVDCLK). The residue at position 287 (Thr-287) is a Phosphothreonine; by autocatalysis. The tract at residues 291–301 (LKKFNARRKLK) is calmodulin-binding. Thr-306 and Thr-307 each carry phosphothreonine; by autocatalysis. Ser-315 bears the Phosphoserine mark. Lys-318 carries the post-translational modification N6-acetyllysine. Phosphoserine is present on residues Ser-319 and Ser-330. Thr-331 is subject to Phosphothreonine. Ser-333 bears the Phosphoserine mark. A phosphothreonine mark is found at Thr-336 and Thr-337. Ser-404, Ser-490, and Ser-494 each carry phosphoserine.

It belongs to the protein kinase superfamily. CAMK Ser/Thr protein kinase family. CaMK subfamily. As to quaternary structure, CAMK2 is composed of 4 different chains: alpha (CAMK2A), beta (CAMK2B), gamma (CAMK2G), and delta (CAMK2D). The different isoforms assemble into homo- or heteromultimeric holoenzymes composed of 12 subunits with two hexameric rings stacked one on top of the other. Interacts with RRAD and CACNB2. Autophosphorylation of Thr-287 following activation by Ca(2+)/calmodulin. Phosphorylation of Thr-287 locks the kinase into an activated state. As to expression, expressed in cardiac muscle and skeletal muscle. Isoform Delta 3, isoform Delta 2, isoform Delta 8 and isoform Delta 9 are expressed in cardiac muscle. Isoform Delta 11 is expressed in skeletal muscle.

It is found in the cell membrane. Its subcellular location is the sarcolemma. The protein resides in the sarcoplasmic reticulum membrane. It carries out the reaction L-seryl-[protein] + ATP = O-phospho-L-seryl-[protein] + ADP + H(+). The enzyme catalyses L-threonyl-[protein] + ATP = O-phospho-L-threonyl-[protein] + ADP + H(+). Its activity is regulated as follows. Activated by Ca(2+)/calmodulin. Binding of calmodulin results in conformational change that relieves intrasteric autoinhibition and allows autophosphorylation of Thr-287 which turns the kinase in a constitutively active form and confers to the kinase a Ca(2+)-independent activity. In terms of biological role, calcium/calmodulin-dependent protein kinase involved in the regulation of Ca(2+) homeostatis and excitation-contraction coupling (ECC) in heart by targeting ion channels, transporters and accessory proteins involved in Ca(2+) influx into the myocyte, Ca(2+) release from the sarcoplasmic reticulum (SR), SR Ca(2+) uptake and Na(+) and K(+) channel transport. Targets also transcription factors and signaling molecules to regulate heart function. In its activated form, is involved in the pathogenesis of dilated cardiomyopathy and heart failure. Contributes to cardiac decompensation and heart failure by regulating SR Ca(2+) release via direct phosphorylation of RYR2 Ca(2+) channel on 'Ser-2808'. In the nucleus, phosphorylates the MEF2 repressor HDAC4, promoting its nuclear export and binding to 14-3-3 protein, and expression of MEF2 and genes involved in the hypertrophic program. Is essential for left ventricular remodeling responses to myocardial infarction. In pathological myocardial remodeling acts downstream of the beta adrenergic receptor signaling cascade to regulate key proteins involved in ECC. Regulates Ca(2+) influx to myocytes by binding and phosphorylating the L-type Ca(2+) channel subunit beta-2 CACNB2. In addition to Ca(2+) channels, can target and regulate the cardiac sarcolemmal Na(+) channel Nav1.5/SCN5A and the K+ channel Kv4.3/KCND3, which contribute to arrhythmogenesis in heart failure. Phosphorylates phospholamban (PLN/PLB), an endogenous inhibitor of SERCA2A/ATP2A2, contributing to the enhancement of SR Ca(2+) uptake that may be important in frequency-dependent acceleration of relaxation (FDAR) and maintenance of contractile function during acidosis. May participate in the modulation of skeletal muscle function in response to exercise, by regulating SR Ca(2+) transport through phosphorylation of PLN/PLB and triadin, a ryanodine receptor-coupling factor. In response to interferon-gamma (IFN-gamma) stimulation, catalyzes phosphorylation of STAT1, stimulating the JAK-STAT signaling pathway. The chain is Calcium/calmodulin-dependent protein kinase type II subunit delta (CAMK2D) from Homo sapiens (Human).